Consider the following 927-residue polypeptide: MNVFAHRCSSCRRAVVLWRPGLHRLYRTERGVYGYRPKISAGSQLQESSTRGKQAASPTVDHGLARLVTAYREHGHKAAKINPLFTGQAVMDMVPEIQEIMEILHGPFSTTGLLNMGKSEATIEEVLAYLDHTYCGQISIETSQLQNYKEREWFSRRFEELKQESFSTEERKHLARLMLECQEFDHFLATKFSTVKRYGGEGAESMMGFFHEMLKMCSFGGVTDVIIGMPHRGRLNLLTGLLQFPPELMFRKMRGLSEFPENSPSIGDVLSHLTSSVDLDFGSHRPLHVTMLPNPSHLEAINPVAVGKTRARQQSLSDGDYSTESSAQPGDKVVCLQVHGDASISGQGIVTETFTLSNLPHYRIGGSIHLIVNNQLGYTTPAERGRSSLYSSDVGKIVGCAVIHVNGDDPEEVLRATRLAVEYQRCFRKDVIIDLLCYRQWGHNELDEPFFTNPSMYKIIRSRKSIPDVYSERLIAEGLMTEEEATEIRTTYYSKFNDHLSNMTLYSPPSTNLQAHWREMIEPSARTTTWDTGLPADLLKFIGAKSVEVPEEFKMHSHLLKMHAQSRVQKLQEATKLDWATAEALAFGSLLCQGFNIRISGQDVGRGTFSQRHAMLVCQETNDTYIPLNHMTPDQKGFLEVSNSALSEEAVLGFEYGMSIESPKLLPIWEAQFGDFFNGAQIIFDTFISGGEAKWLLQSGIVILLPHGYDGAGPEHSSCRIERFLQMCDSTEEGVDGDTVNMFVVHPTTPAQYFHLLRRQMVRSFRKPLIVASPKMLLRYPAAVSSLEDIAPGKTFRSVIGDSSADPKSVSKVILCSGKHYYALHKQREALGEQGRSSAIIRVEELCPFPLEALQQEIHRYPKAKDFIWSQEEPQNMGAWTFVAPRFEKQLACKLRLVSRPALPAPAVGIGTLHQQQQEEITVKTLS.

The protein belongs to the alpha-ketoglutarate dehydrogenase family. The 2-oxoadipate dehydrogenase complex is composed of OADH (2-oxoadipate dehydrogenase; E1a), DLST (dihydrolipoamide succinyltransferase; E2) and DLD (dihydrolipoamide dehydrogenase; E3). E1a functional unit is a dimer. It depends on thiamine diphosphate as a cofactor.

It localises to the mitochondrion. It catalyses the reaction N(6)-[(R)-lipoyl]-L-lysyl-[protein] + 2-oxoadipate + H(+) = N(6)-[(R)-S(8)-glutaryldihydrolipoyl]-L-lysyl-[protein] + CO2. Its pathway is amino-acid degradation. 2-oxoadipate dehydrogenase (E1a) component of the 2-oxoadipate dehydrogenase complex (OADHC). Participates in the first step, rate limiting for the overall conversion of 2-oxoadipate (alpha-ketoadipate) to glutaryl-CoA and CO(2) catalyzed by the whole OADHC. Catalyzes the irreversible decarboxylation of 2-oxoadipate via the thiamine diphosphate (ThDP) cofactor and subsequent transfer of the decarboxylated acyl intermediate on an oxidized dihydrolipoyl group that is covalently amidated to the E2 enzyme (dihydrolipoyllysine-residue succinyltransferase or DLST). Can catalyze the decarboxylation of 2-oxoglutarate in vitro, but at a much lower rate than 2-oxoadipate. Responsible for the last step of L-lysine, L-hydroxylysine and L-tryptophan catabolism with the common product being 2-oxoadipate. The chain is 2-oxoadipate dehydrogenase complex component E1 (dhtkd1) from Xenopus laevis (African clawed frog).